We begin with the raw amino-acid sequence, 217 residues long: Adenylate kinase (217 aa).

11–16 (GAGKGT) contacts ATP. Residues 31-60 (STGDMFREAMANKTPVGLEAKSYIDKGDLV) form an NMP region. Residues T32, R37, 58-60 (DLV), 86-89 (GFPR), and Q93 contribute to the AMP site. The LID stretch occupies residues 127–165 (ARFMCKNCGATYNKFSKKPKVEGTCDRCGGHEFYQREDD). R128 lines the ATP pocket. Residues C131 and C134 each coordinate Zn(2+). ATP is bound at residue 137-138 (TY). Zn(2+) is bound by residues C151 and C154. 2 residues coordinate AMP: R162 and R173. Position 201 (Q201) interacts with ATP.

Belongs to the adenylate kinase family. In terms of assembly, monomer.

It is found in the cytoplasm. The catalysed reaction is AMP + ATP = 2 ADP. The protein operates within purine metabolism; AMP biosynthesis via salvage pathway; AMP from ADP: step 1/1. Its function is as follows. Catalyzes the reversible transfer of the terminal phosphate group between ATP and AMP. Plays an important role in cellular energy homeostasis and in adenine nucleotide metabolism. The polypeptide is Adenylate kinase (Lactobacillus delbrueckii subsp. bulgaricus (strain ATCC 11842 / DSM 20081 / BCRC 10696 / JCM 1002 / NBRC 13953 / NCIMB 11778 / NCTC 12712 / WDCM 00102 / Lb 14)).